The primary structure comprises 313 residues: Probable inactive peptidyl-prolyl cis-trans isomerase-like 6 (313 aa).

Positions 147-310 (YLDICIDLSP…LLCSIADSGV (164 aa)) constitute a PPIase cyclophilin-type domain.

It belongs to the cyclophilin-type PPIase family.

Probable inactive PPIase with no peptidyl-prolyl cis-trans isomerase activity. The polypeptide is Probable inactive peptidyl-prolyl cis-trans isomerase-like 6 (Mus musculus (Mouse)).